The chain runs to 202 residues: Cyclin-U4-1 (202 aa).

This sequence belongs to the cyclin family. Cyclin U/P subfamily. Interacts with CDKA-1. In terms of tissue distribution, expressed in roots, stems and flowers. Expressed in the shoot apex, leaf primordia and young leaves.

The sequence is that of Cyclin-U4-1 (CYCU4-1) from Arabidopsis thaliana (Mouse-ear cress).